The sequence spans 263 residues: Probable WRKY transcription factor 62 (263 aa).

A disordered region spans residues 59–104; that stretch reads DHQDDQSNNSSPQDSSPVLESSRKPLHKRGRKTSMAESSDYHRHES. Residues 64-74 are compositionally biased toward low complexity; sequence QSNNSSPQDSS. Residues 104–174 constitute a DNA-binding region (WRKY); sequence SSTPIYHDGF…GQHICQLHQA (71 aa).

This sequence belongs to the WRKY group III family.

It is found in the nucleus. Transcription factor. Interacts specifically with the W box (5'-(T)TGAC[CT]-3'), a frequently occurring elicitor-responsive cis-acting element. This chain is Probable WRKY transcription factor 62 (WRKY62), found in Arabidopsis thaliana (Mouse-ear cress).